The sequence spans 119 residues: NADH-quinone oxidoreductase subunit A (119 aa).

A run of 3 helical transmembrane segments spans residues 7 to 27, 63 to 83, and 88 to 108; these read FPVL…MFLG, LIAI…PWGV, and IGWL…VGFV.

This sequence belongs to the complex I subunit 3 family. NDH-1 is composed of 14 different subunits. Subunits NuoA, H, J, K, L, M, N constitute the membrane sector of the complex.

It is found in the cell inner membrane. It catalyses the reaction a quinone + NADH + 5 H(+)(in) = a quinol + NAD(+) + 4 H(+)(out). In terms of biological role, NDH-1 shuttles electrons from NADH, via FMN and iron-sulfur (Fe-S) centers, to quinones in the respiratory chain. The immediate electron acceptor for the enzyme in this species is believed to be ubiquinone. Couples the redox reaction to proton translocation (for every two electrons transferred, four hydrogen ions are translocated across the cytoplasmic membrane), and thus conserves the redox energy in a proton gradient. This is NADH-quinone oxidoreductase subunit A from Polynucleobacter necessarius subsp. necessarius (strain STIR1).